Reading from the N-terminus, the 110-residue chain is Putative UPF0377 protein YIR040C (110 aa).

This sequence belongs to the UPF0377 family.

The chain is Putative UPF0377 protein YIR040C from Saccharomyces cerevisiae (strain ATCC 204508 / S288c) (Baker's yeast).